The chain runs to 619 residues: Pentatricopeptide repeat-containing protein At3g22470, mitochondrial (619 aa).

The transit peptide at 1 to 28 directs the protein to the mitochondrion; the sequence is MIQRLIPLNRKASNFTQILEKGTSLLHY. PPR repeat units follow at residues 69–103, 104–138, 139–173, 174–208, 209–243, 244–278, 279–313, 314–348, 349–383, 384–418, 419–453, 454–488, 489–523, 524–558, and 559–593; these read TPIDFNRLCSAVARTKQYDLVLGFCKGMELNGIEH, DMYTMTIMINCYCRKKKLLFAFSVLGRAWKLGYEP, DTITFSTLVNGFCLEGRVSEAVALVDRMVEMKQRP, DLVTVSTLINGLCLKGRVSEALVLIDRMVEYGFQP, DEVTYGPVLNRLCKSGNSALALDLFRKMEERNIKA, SVVQYSIVIDSLCKDGSFDDALSLFNEMEMKGIKA, DVVTYSSLIGGLCNDGKWDDGAKMLREMIGRNIIP, DVVTFSALIDVFVKEGKLLEAKELYNEMITRGIAP, DTITYNSLIDGFCKENCLHEANQMFDLMVSKGCEP, DIVTYSILINSYCKAKRVDDGMRLFREISSKGLIP, NTITYNTLVLGFCQSGKLNAAKELFQEMVSRGVPP, SVVTYGILLDGLCDNGELNKALEIFEKMQKSRMTL, GIGIYNIIIHGMCNASKVDDAWSLFCSLSDKGVKP, DVVTYNVMIGGLCKKGSLSEADMLFRKMKEDGCTP, and DDFTYNILIRAHLGGSGLISSVELIEEMKVCGFSA.

This sequence belongs to the PPR family. P subfamily.

The protein resides in the mitochondrion. The protein is Pentatricopeptide repeat-containing protein At3g22470, mitochondrial of Arabidopsis thaliana (Mouse-ear cress).